The primary structure comprises 67 residues: Conotoxin Pu5.1 (67 aa).

The signal sequence occupies residues 1–22; it reads MRCVPVFVILLLLIASTPSVDA. Residues 23-51 constitute a propeptide that is removed on maturation; it reads RPNPKDDVPLASFHEDANGILQMLWKKGR. Position 63 is a tryptophan amide (Trp-63).

It belongs to the conotoxin T superfamily. In terms of processing, contains 2 disulfide bonds that can be either 'C1-C3, C2-C4' or 'C1-C4, C2-C3', since these disulfide connectivities have been observed for conotoxins with cysteine framework V (for examples, see AC P0DQQ7 and AC P81755). In terms of tissue distribution, expressed by the venom duct.

It is found in the secreted. This is Conotoxin Pu5.1 from Conus pulicarius (Flea-bitten cone).